A 914-amino-acid polypeptide reads, in one-letter code: Translation initiation factor IF-2 (914 aa).

Disordered stretches follow at residues 246–271 and 293–313; these read EDGE…KKKG and SGMD…QRRM. Residues 249-266 show a composition bias toward basic and acidic residues; sequence EAAKKKAAKPDGGEDVGV. Residues 411 to 581 form the tr-type G domain; that stretch reads TRPPVVTIMG…LAEAEIRELK (171 aa). Residues 420–427 are G1; the sequence is GHVDHGKT. GTP is bound at residue 420 to 427; the sequence is GHVDHGKT. Residues 445–449 form a G2 region; that stretch reads GITQH. Positions 467-470 are G3; the sequence is DTPG. GTP contacts are provided by residues 467 to 471 and 521 to 524; these read DTPGH and NKID. Positions 521–524 are G4; that stretch reads NKID. A G5 region spans residues 557–559; it reads SAK.

This sequence belongs to the TRAFAC class translation factor GTPase superfamily. Classic translation factor GTPase family. IF-2 subfamily.

The protein localises to the cytoplasm. One of the essential components for the initiation of protein synthesis. Protects formylmethionyl-tRNA from spontaneous hydrolysis and promotes its binding to the 30S ribosomal subunits. Also involved in the hydrolysis of GTP during the formation of the 70S ribosomal complex. This is Translation initiation factor IF-2 from Chlorobaculum tepidum (strain ATCC 49652 / DSM 12025 / NBRC 103806 / TLS) (Chlorobium tepidum).